A 102-amino-acid chain; its full sequence is NADH-quinone oxidoreductase subunit K (102 aa).

The next 3 helical transmembrane spans lie at 5–25 (IAHY…GIFL), 31–51 (IIIL…FIAF), and 66–86 (FVLT…VVFF).

The protein belongs to the complex I subunit 4L family. As to quaternary structure, NDH-1 is composed of 14 different subunits. Subunits NuoA, H, J, K, L, M, N constitute the membrane sector of the complex.

The protein localises to the cell inner membrane. It carries out the reaction a quinone + NADH + 5 H(+)(in) = a quinol + NAD(+) + 4 H(+)(out). NDH-1 shuttles electrons from NADH, via FMN and iron-sulfur (Fe-S) centers, to quinones in the respiratory chain. The immediate electron acceptor for the enzyme in this species is believed to be ubiquinone. Couples the redox reaction to proton translocation (for every two electrons transferred, four hydrogen ions are translocated across the cytoplasmic membrane), and thus conserves the redox energy in a proton gradient. The sequence is that of NADH-quinone oxidoreductase subunit K from Chelativorans sp. (strain BNC1).